An 82-amino-acid polypeptide reads, in one-letter code: Small ribosomal subunit protein uS17 (82 aa).

Belongs to the universal ribosomal protein uS17 family. In terms of assembly, part of the 30S ribosomal subunit.

One of the primary rRNA binding proteins, it binds specifically to the 5'-end of 16S ribosomal RNA. This is Small ribosomal subunit protein uS17 from Bradyrhizobium diazoefficiens (strain JCM 10833 / BCRC 13528 / IAM 13628 / NBRC 14792 / USDA 110).